Consider the following 302-residue polypeptide: Sulfate adenylyltransferase subunit 2 (302 aa).

It belongs to the PAPS reductase family. CysD subfamily. Heterodimer composed of CysD, the smaller subunit, and CysN.

The catalysed reaction is sulfate + ATP + H(+) = adenosine 5'-phosphosulfate + diphosphate. Its pathway is sulfur metabolism; hydrogen sulfide biosynthesis; sulfite from sulfate: step 1/3. Its function is as follows. With CysN forms the ATP sulfurylase (ATPS) that catalyzes the adenylation of sulfate producing adenosine 5'-phosphosulfate (APS) and diphosphate, the first enzymatic step in sulfur assimilation pathway. APS synthesis involves the formation of a high-energy phosphoric-sulfuric acid anhydride bond driven by GTP hydrolysis by CysN coupled to ATP hydrolysis by CysD. In Escherichia coli O9:H4 (strain HS), this protein is Sulfate adenylyltransferase subunit 2.